The following is a 347-amino-acid chain: WAT1-related protein At4g15540 (347 aa).

The next 10 helical transmembrane spans lie at 15 to 35, 47 to 67, 73 to 93, 108 to 128, 139 to 159, 178 to 198, 210 to 230, 243 to 263, 276 to 296, and 299 to 319; these read VVPF…SILY, VFVF…SLIF, LPTA…LGLT, TLSS…AIFF, ATQA…VIVL, WIIG…WFIL, IAVV…VCLL, GFSL…GSVI, ISLF…IFLG, and LHLG…TVIW. In terms of domain architecture, EamA 1 spans 30–158; sequence GSSILYKAAT…VSISGALVIV (129 aa). An EamA 2 domain is found at 216-317; sequence YNLCATLISG…VILSFGFYTV (102 aa).

This sequence belongs to the drug/metabolite transporter (DMT) superfamily. Plant drug/metabolite exporter (P-DME) (TC 2.A.7.4) family.

The protein resides in the membrane. In Arabidopsis thaliana (Mouse-ear cress), this protein is WAT1-related protein At4g15540.